A 281-amino-acid chain; its full sequence is MYIFFPKLNPIIFTIGPVSARWYGFMYVISFLFAMWYGKKCSIKNKKIWYEKKIETLLYAIFLGSCIGGRIGYIIFYNFSYYSQNMLSVFYIWEGGMSFHGGLIGAIIVMSYFSFKYKKKILEISDFITPLIPFGLGAGRIGNFINSELWGRVSPNFSYAMIFPNSQNQDLKEIKKYPELQLLLDQYGALPRHPTQLYEFFLEGILLFFIIYFFSKKDRPTGSISGLFLIFYGLFRIFIEFFREPDPQIGLLKNIITMGQILSLPMIIAGLIIMYKSCYKK.

The next 7 helical transmembrane spans lie at 11-31 (IIFT…VISF), 57-77 (LLYA…IIFY), 89-109 (VFYI…AIIV), 121-141 (ILEI…AGRI), 194-214 (PTQL…IYFF), 222-242 (GSIS…IEFF), and 255-275 (IITM…IIMY). Residue R140 coordinates a 1,2-diacyl-sn-glycero-3-phospho-(1'-sn-glycerol).

This sequence belongs to the Lgt family.

It is found in the cell inner membrane. It carries out the reaction L-cysteinyl-[prolipoprotein] + a 1,2-diacyl-sn-glycero-3-phospho-(1'-sn-glycerol) = an S-1,2-diacyl-sn-glyceryl-L-cysteinyl-[prolipoprotein] + sn-glycerol 1-phosphate + H(+). The protein operates within protein modification; lipoprotein biosynthesis (diacylglyceryl transfer). Its function is as follows. Catalyzes the transfer of the diacylglyceryl group from phosphatidylglycerol to the sulfhydryl group of the N-terminal cysteine of a prolipoprotein, the first step in the formation of mature lipoproteins. The sequence is that of Phosphatidylglycerol--prolipoprotein diacylglyceryl transferase from Buchnera aphidicola subsp. Acyrthosiphon pisum (strain Tuc7).